Reading from the N-terminus, the 558-residue chain is Potassium-transporting ATPase potassium-binding subunit 1 (558 aa).

Transmembrane regions (helical) follow at residues 1 to 21 (MEII…SGYL), 66 to 86 (FNGF…WLFL), 127 to 147 (MIVM…VCIA), 166 to 186 (IVRF…ILLM), 245 to 265 (IWSN…MLFL), 281 to 301 (ALIL…LTMW), 327 to 347 (FGAG…TGSV), 354 to 374 (LTPI…VFGG), 377 to 397 (VGLM…SLMV), 416 to 436 (IVLV…LAFM), 482 to 502 (ISTG…QLMI), and 531 to 551 (IVFI…LGPI).

This sequence belongs to the KdpA family. As to quaternary structure, the system is composed of three essential subunits: KdpA, KdpB and KdpC.

Its subcellular location is the cell membrane. Part of the high-affinity ATP-driven potassium transport (or Kdp) system, which catalyzes the hydrolysis of ATP coupled with the electrogenic transport of potassium into the cytoplasm. This subunit binds the extracellular potassium ions and delivers the ions to the membrane domain of KdpB through an intramembrane tunnel. The polypeptide is Potassium-transporting ATPase potassium-binding subunit 1 (Staphylococcus aureus (strain Mu50 / ATCC 700699)).